The chain runs to 368 residues: Probable dual-specificity RNA methyltransferase RlmN (368 aa).

Catalysis depends on glutamate 109, which acts as the Proton acceptor. The Radical SAM core domain maps to 115 to 355 (YPDRVTMCIS…VTVRDTRGQE (241 aa)). Cysteine 122 and cysteine 360 form a disulfide bridge. [4Fe-4S] cluster contacts are provided by cysteine 129, cysteine 133, and cysteine 136. Residues 184 to 185 (GE), serine 218, 241 to 243 (SLH), and asparagine 317 contribute to the S-adenosyl-L-methionine site. Catalysis depends on cysteine 360, which acts as the S-methylcysteine intermediate.

Belongs to the radical SAM superfamily. RlmN family. The cofactor is [4Fe-4S] cluster.

The protein localises to the cytoplasm. The catalysed reaction is adenosine(2503) in 23S rRNA + 2 reduced [2Fe-2S]-[ferredoxin] + 2 S-adenosyl-L-methionine = 2-methyladenosine(2503) in 23S rRNA + 5'-deoxyadenosine + L-methionine + 2 oxidized [2Fe-2S]-[ferredoxin] + S-adenosyl-L-homocysteine. The enzyme catalyses adenosine(37) in tRNA + 2 reduced [2Fe-2S]-[ferredoxin] + 2 S-adenosyl-L-methionine = 2-methyladenosine(37) in tRNA + 5'-deoxyadenosine + L-methionine + 2 oxidized [2Fe-2S]-[ferredoxin] + S-adenosyl-L-homocysteine. In terms of biological role, specifically methylates position 2 of adenine 2503 in 23S rRNA and position 2 of adenine 37 in tRNAs. This chain is Probable dual-specificity RNA methyltransferase RlmN, found in Streptomyces griseus subsp. griseus (strain JCM 4626 / CBS 651.72 / NBRC 13350 / KCC S-0626 / ISP 5235).